Consider the following 155-residue polypeptide: Protein-export protein SecB (155 aa).

Belongs to the SecB family. As to quaternary structure, homotetramer, a dimer of dimers. One homotetramer interacts with 1 SecA dimer.

The protein localises to the cytoplasm. One of the proteins required for the normal export of preproteins out of the cell cytoplasm. It is a molecular chaperone that binds to a subset of precursor proteins, maintaining them in a translocation-competent state. It also specifically binds to its receptor SecA. This Psychromonas ingrahamii (strain DSM 17664 / CCUG 51855 / 37) protein is Protein-export protein SecB.